The primary structure comprises 196 residues: Nodulation protein A (196 aa).

The protein belongs to the NodA family.

The protein localises to the cytoplasm. Functionally, N-acyltransferase required for nodulation. Acts in the production of a small, heat-stable compound (Nod) that stimulates mitosis in various plant protoplasts. The sequence is that of Nodulation protein A from Mesorhizobium plurifarium.